A 373-amino-acid chain; its full sequence is MFLNSLKLKDFRNYKSLQVDFSNSINVLIGDNAQGKTNLLEAIYILSMARSHRDNNDRDLINWSSDFSDITGEVQSKMGKFPLEVRITRTGKKVFVNHLTENRLSDYIGNLHTVLFAPEDLDLVKGSPGVRRKFIDSEFGQMSANYLFNLLQYRSVLKNRNAYLKNIKWIGNNPKIDEDYLKVLNDQLIDFGSEIIFQRFVLVKELEKYSYQIHKAISRNEKLTIKYASFSGIDDQSTKEEISKIFNNQLLKNKTRELFLKSTSVGPHHDDLKFSINGKEVGSFASQGQQRTTALSVRLAEIEMMKYETGEYPILLLDDVLSELDGDRQTQLLNFIQDKVQTFLTTTSLSDVERDLIKDPKIYQVKGGTLVNG.

ATP is bound at residue 30 to 37 (GDNAQGKT).

This sequence belongs to the RecF family.

It is found in the cytoplasm. In terms of biological role, the RecF protein is involved in DNA metabolism; it is required for DNA replication and normal SOS inducibility. RecF binds preferentially to single-stranded, linear DNA. It also seems to bind ATP. The chain is DNA replication and repair protein RecF from Oenococcus oeni (strain ATCC BAA-331 / PSU-1).